Consider the following 255-residue polypeptide: uncharacterized protein (255 aa).

A signal peptide spans 1-22 (MNILSPIIIIIILIVLFYVMRM).

This is an uncharacterized protein from Acanthamoeba polyphaga (Amoeba).